A 1023-amino-acid polypeptide reads, in one-letter code: StAR-related lipid transfer protein 8 (1023 aa).

Disordered regions lie at residues 46–67 (PMGS…SSCE) and 82–161 (TVSL…KVSK). The segment covering 99–114 (PSSSDRPLLSPTQGQE) has biased composition (polar residues). Phosphoserine is present on S108. Positions 120 to 130 (AKKRHRNRSFL) are enriched in basic residues. The span at 143-161 (GSQQAEPKHSPATSEKVSK) shows a compositional bias: polar residues. Residue R169 is modified to Asymmetric dimethylarginine. Phosphoserine is present on residues S235 and S238. Positions 387–397 (PAQAPAEAEPV) are enriched in low complexity. 2 disordered regions span residues 387–461 (PAQA…MNEA) and 467–486 (LAGL…VGAS). The segment covering 441-459 (ISDTVASSSELDSSGNSMN) has biased composition (polar residues). S498 and S506 each carry phosphoserine. In terms of domain architecture, Rho-GAP spans 573-777 (PPLIHVQRTG…HMISDCKKLF (205 aa)). The disordered stretch occupies residues 733–757 (KKDSPSPRIKSKRSLIGRPGPRDLS). Positions 809–1017 (AQAAGVSLSL…RDSFPTLQAA (209 aa)) constitute an START domain.

Binds both the SH2 and PTB domains of TNS1. In terms of tissue distribution, widely expressed with highest levels in kidney, lung and placenta.

Its subcellular location is the cell junction. The protein localises to the focal adhesion. In terms of biological role, accelerates GTPase activity of RHOA and CDC42, but not RAC1. Stimulates the hydrolysis of phosphatidylinositol 4,5-bisphosphate by PLCD1. In Homo sapiens (Human), this protein is StAR-related lipid transfer protein 8 (STARD8).